Reading from the N-terminus, the 264-residue chain is Thymidylate synthase (264 aa).

A dUMP-binding site is contributed by Arg-21. Position 51 (His-51) interacts with (6R)-5,10-methylene-5,6,7,8-tetrahydrofolate. Residue 126–127 (RR) coordinates dUMP. Residue Cys-146 is the Nucleophile of the active site. Residues 166–169 (RSAD), Asn-177, and 207–209 (HLY) contribute to the dUMP site. Position 169 (Asp-169) interacts with (6R)-5,10-methylene-5,6,7,8-tetrahydrofolate. Ala-263 is a binding site for (6R)-5,10-methylene-5,6,7,8-tetrahydrofolate.

Belongs to the thymidylate synthase family. Bacterial-type ThyA subfamily. As to quaternary structure, homodimer.

The protein localises to the cytoplasm. It catalyses the reaction dUMP + (6R)-5,10-methylene-5,6,7,8-tetrahydrofolate = 7,8-dihydrofolate + dTMP. The protein operates within pyrimidine metabolism; dTTP biosynthesis. Functionally, catalyzes the reductive methylation of 2'-deoxyuridine-5'-monophosphate (dUMP) to 2'-deoxythymidine-5'-monophosphate (dTMP) while utilizing 5,10-methylenetetrahydrofolate (mTHF) as the methyl donor and reductant in the reaction, yielding dihydrofolate (DHF) as a by-product. This enzymatic reaction provides an intracellular de novo source of dTMP, an essential precursor for DNA biosynthesis. The protein is Thymidylate synthase of Hahella chejuensis (strain KCTC 2396).